A 513-amino-acid polypeptide reads, in one-letter code: Sterol 14-alpha demethylase (513 aa).

A helical membrane pass occupies residues 10-30; sequence FTLVSAYAAAGLLAIIVLNLL. 2 N-linked (GlcNAc...) asparagine glycosylation sites follow: Asn-37 and Asn-406. Position 453 (Cys-453) interacts with heme.

It belongs to the cytochrome P450 family. It depends on heme as a cofactor.

The protein resides in the endoplasmic reticulum membrane. It carries out the reaction a 14alpha-methyl steroid + 3 reduced [NADPH--hemoprotein reductase] + 3 O2 = a Delta(14) steroid + formate + 3 oxidized [NADPH--hemoprotein reductase] + 4 H2O + 4 H(+). The enzyme catalyses a 14alpha-methyl steroid + reduced [NADPH--hemoprotein reductase] + O2 = a 14alpha-hydroxymethyl steroid + oxidized [NADPH--hemoprotein reductase] + H2O + H(+). The catalysed reaction is a 14alpha-hydroxymethyl steroid + reduced [NADPH--hemoprotein reductase] + O2 = a 14alpha-formyl steroid + oxidized [NADPH--hemoprotein reductase] + 2 H2O + H(+). It catalyses the reaction a 14alpha-formyl steroid + reduced [NADPH--hemoprotein reductase] + O2 = a Delta(14) steroid + formate + oxidized [NADPH--hemoprotein reductase] + H2O + 2 H(+). It carries out the reaction lanosterol + 3 reduced [NADPH--hemoprotein reductase] + 3 O2 = 4,4-dimethyl-5alpha-cholesta-8,14,24-trien-3beta-ol + formate + 3 oxidized [NADPH--hemoprotein reductase] + 4 H2O + 4 H(+). The enzyme catalyses lanosterol + reduced [NADPH--hemoprotein reductase] + O2 = 32-hydroxylanosterol + oxidized [NADPH--hemoprotein reductase] + H2O + H(+). The catalysed reaction is 32-hydroxylanosterol + reduced [NADPH--hemoprotein reductase] + O2 = 32-oxolanosterol + oxidized [NADPH--hemoprotein reductase] + 2 H2O + H(+). It catalyses the reaction 32-oxolanosterol + reduced [NADPH--hemoprotein reductase] + O2 = 4,4-dimethyl-5alpha-cholesta-8,14,24-trien-3beta-ol + formate + oxidized [NADPH--hemoprotein reductase] + H2O + 2 H(+). It carries out the reaction eburicol + 3 reduced [NADPH--hemoprotein reductase] + 3 O2 = 14-demethyleburicol + formate + 3 oxidized [NADPH--hemoprotein reductase] + 4 H2O + 4 H(+). The enzyme catalyses eburicol + reduced [NADPH--hemoprotein reductase] + O2 = 32-hydroxyeburicol + oxidized [NADPH--hemoprotein reductase] + H2O + H(+). The catalysed reaction is 32-hydroxyeburicol + reduced [NADPH--hemoprotein reductase] + O2 = 32-oxoeburicol + oxidized [NADPH--hemoprotein reductase] + 2 H2O + H(+). It catalyses the reaction 32-oxoeburicol + reduced [NADPH--hemoprotein reductase] + O2 = 14-demethyleburicol + formate + oxidized [NADPH--hemoprotein reductase] + H2O + 2 H(+). The protein operates within steroid biosynthesis; sterol biosynthesis. In terms of biological role, sterol 14alpha-demethylase, encoded by cyp51A, cyp51B and cyp51C, that plays a critical role in the third module of ergosterol biosynthesis pathway, being ergosterol the major sterol component in fungal membranes that participates in a variety of functions. The third module or late pathway involves the ergosterol synthesis itself through consecutive reactions that mainly occur in the endoplasmic reticulum (ER) membrane. In filamentous fungi, during the initial step of this module, lanosterol (lanosta-8,24-dien-3beta-ol) can be metabolized to eburicol. Sterol 14alpha-demethylase catalyzes the three-step oxidative removal of the 14alpha-methyl group (C-32) of both these sterols in the form of formate, and converts eburicol and lanosterol to 14-demethyleburicol (4,4,24-trimethylergosta-8,14,24(28)-trienol) and 4,4-dimethyl-5alpha-cholesta-8,14,24-trien-3beta-ol, respectively, which are further metabolized by other enzymes in the pathway to ergosterol. Can also use substrates not intrinsic to fungi, such as 24,25-dihydrolanosterol (DHL), producing 4,4'-dimethyl-8,14-cholestadien-3-beta-ol, but at lower rates than the endogenous substrates. As a target of azole drugs, plays a crucial role in azole susceptibility. The sequence is that of Sterol 14-alpha demethylase from Aspergillus flavus (strain ATCC 200026 / FGSC A1120 / IAM 13836 / NRRL 3357 / JCM 12722 / SRRC 167).